The chain runs to 446 residues: Maltoporin (446 aa).

The N-terminal stretch at 1–25 (MMTTLRKLPLAVAVAAGMMSVQAMA) is a signal peptide.

Belongs to the porin LamB (TC 1.B.3) family. As to quaternary structure, homotrimer formed of three 18-stranded antiparallel beta-barrels, containing three independent channels.

It localises to the cell outer membrane. It carries out the reaction beta-maltose(in) = beta-maltose(out). Functionally, involved in the transport of maltose and maltodextrins. This chain is Maltoporin, found in Escherichia fergusonii (strain ATCC 35469 / DSM 13698 / CCUG 18766 / IAM 14443 / JCM 21226 / LMG 7866 / NBRC 102419 / NCTC 12128 / CDC 0568-73).